Consider the following 678-residue polypeptide: Proprotein convertase subtilisin/kexin type 4 (678 aa).

A signal peptide spans 1 to 26; it reads MRPSQTALWLGLVLSLALLAVGWASA. A propeptide spanning residues 27–110 is cleaved from the precursor; that stretch reads RPPIYVSSWA…QQTLRRRVKR (84 aa). Residues 123-437 enclose the Peptidase S8 domain; sequence QWYMNKEIEQ…YGLLDAGLLV (315 aa). Active-site charge relay system residues include Asp-155, His-196, and Ser-370. The P/Homo B domain maps to 446-580; sequence TKPQKKCTIR…TLLLYGTAED (135 aa). Asn-472 carries N-linked (GlcNAc...) asparagine glycosylation.

Belongs to the peptidase S8 family. Furin subfamily. The proPCSK4 form interacts with HSPA5; the interaction takes place at the endoplasmic reticulum. N-glycosylated. Post-translationally, synthesized in the endoplasmic reticulum as a zymogen, is matured by autocatalytic cleavage between the prodomain and the catalytic domain. Expressed abundantly in the testis. High levels seen in germ cells but not in Leydig, Sertoli or peritubular cells. Expressed in the pachytene spermatocytes and the round spermatids but not in the elongating spermatids. May be expressed within hormonally stimulated ovaries.

The protein resides in the cytoplasmic vesicle. Its subcellular location is the secretory vesicle. The protein localises to the acrosome membrane. In terms of biological role, proprotein convertase involved in the processing of hormone and other protein precursors at sites comprised of pairs of basic amino acid residues. In males, important for ADAM2 processing as well as other acrosomal proteins with roles in fertilization and critical for normal fertilization events such as sperm capacitation, acrosome reaction and binding of sperm to zona pellucida. Plays also a role in female fertility, involved in the regulation of trophoblast migration and placental development, may be through the proteolytical processing and activation of proteins such as IGF2. May also participate in folliculogenesis in the ovaries. This Rattus norvegicus (Rat) protein is Proprotein convertase subtilisin/kexin type 4 (Pcsk4).